Reading from the N-terminus, the 88-residue chain is Small ribosomal subunit protein uS17 (88 aa).

It belongs to the universal ribosomal protein uS17 family. Part of the 30S ribosomal subunit.

One of the primary rRNA binding proteins, it binds specifically to the 5'-end of 16S ribosomal RNA. The chain is Small ribosomal subunit protein uS17 from Pseudomonas savastanoi pv. phaseolicola (strain 1448A / Race 6) (Pseudomonas syringae pv. phaseolicola (strain 1448A / Race 6)).